A 343-amino-acid chain; its full sequence is Nicotianamine synthase 3 (343 aa).

The protein belongs to the nicotianamine synthase (NAS)-like family. In terms of tissue distribution, expressed in leaves.

It carries out the reaction 3 S-adenosyl-L-methionine = nicotianamine + 3 S-methyl-5'-thioadenosine + 3 H(+). Its function is as follows. Synthesizes nicotianamine, a polyamine that is the first intermediate in the synthesis of the phytosiderophores of the mugineic acid type found in gramineae which serve as a sensor for the physiological iron status within the plant, and/or might be involved in the transport of iron. The protein is Nicotianamine synthase 3 (NAS3) of Oryza sativa subsp. indica (Rice).